Reading from the N-terminus, the 591-residue chain is N-acetylgalactosaminyltransferase 7 (591 aa).

Over 1-11 the chain is Cytoplasmic; sequence MRVSTIRSGRI. A helical; Signal-anchor for type II membrane protein membrane pass occupies residues 12 to 29; the sequence is CRLALCLLVLLPLLYLLA. N-linked (GlcNAc...) asparagine glycosylation is present at Asn-30. Topologically, residues 30-591 are lumenal; it reads NWSDHHKRVQ…WWFKEIRPRW (562 aa). The tract at residues 68 to 100 is disordered; the sequence is DGLGNFEPKDVKPRSGPGENGEAHSLSPDKKHM. Cystine bridges form between Cys-132-Cys-367, Cys-358-Cys-441, Cys-479-Cys-496, Cys-519-Cys-532, and Cys-558-Cys-573. The segment at 141–251 is catalytic subdomain A; it reads LPRTSVIIVF…TNWLPPLLAP (111 aa). Asp-182 and Arg-212 together coordinate substrate. Positions 235 and 237 each coordinate Mn(2+). The catalytic subdomain B stretch occupies residues 313–375; the sequence is PYRSPTHAGG…PCSRVGHVYR (63 aa). Trp-344 is a binding site for substrate. His-372 is a binding site for Mn(2+). Positions 375 and 380 each coordinate substrate. The Ricin B-type lectin domain maps to 466–585; that stretch reads LHWGELRSVA…NDSYQQWWFK (120 aa). A glycan (N-linked (GlcNAc...) asparagine) is linked at Asn-576.

It belongs to the glycosyltransferase 2 family. GalNAc-T subfamily. It depends on Mn(2+) as a cofactor. Expressed in developing oocytes and egg chambers. During embryonic stages 9-11, expressed in the primordium of the foregut, midgut and hindgut. Expressed in the salivary glands from embryonic stage 12 onwards. During embryonic stages 12-13, expressed in the posterior midgut and hindgut. During embryonic stages 14-15, expression continues in the hindgut. During embryonic stages 16-17, expressed in the antennomaxillary complex. In third instar larvae, ubiquitously expressed in wing, with increased expression in the notum and ventral wing pouch, eye-antennal, leg and haltere imaginal disks.

The protein resides in the golgi apparatus membrane. The enzyme catalyses L-seryl-[protein] + UDP-N-acetyl-alpha-D-galactosamine = a 3-O-[N-acetyl-alpha-D-galactosaminyl]-L-seryl-[protein] + UDP + H(+). It carries out the reaction L-threonyl-[protein] + UDP-N-acetyl-alpha-D-galactosamine = a 3-O-[N-acetyl-alpha-D-galactosaminyl]-L-threonyl-[protein] + UDP + H(+). It participates in protein modification; protein glycosylation. Its function is as follows. Glycopeptide transferase involved in O-linked oligosaccharide biosynthesis, which catalyzes the transfer of an N-acetyl-D-galactosamine residue to an already glycosylated peptide. In contrast to other proteins of the family, it does not act as a peptide transferase that transfers GalNAc onto serine or threonine residue on the protein receptor, but instead requires the prior addition of a GalNAc on a peptide before adding additional GalNAc moieties. Some peptide transferase activity is however not excluded, considering that its appropriate peptide substrate may remain unidentified. Prefers the monoglycosylated Muc5AC-3 as substrate. Might have a role in protein O-glycosylation in the Golgi and thereby in establishing and/or maintaining a proper secretory apparatus structure. The chain is N-acetylgalactosaminyltransferase 7 from Drosophila melanogaster (Fruit fly).